Here is a 426-residue protein sequence, read N- to C-terminus: Enolase (426 aa).

Glutamine 165 provides a ligand contact to (2R)-2-phosphoglycerate. The Proton donor role is filled by glutamate 209. Positions 244, 287, and 313 each coordinate Mg(2+). (2R)-2-phosphoglycerate contacts are provided by lysine 338, arginine 367, serine 368, and lysine 389. The active-site Proton acceptor is the lysine 338.

It belongs to the enolase family. Mg(2+) serves as cofactor.

It is found in the cytoplasm. The protein resides in the secreted. The protein localises to the cell surface. The catalysed reaction is (2R)-2-phosphoglycerate = phosphoenolpyruvate + H2O. The protein operates within carbohydrate degradation; glycolysis; pyruvate from D-glyceraldehyde 3-phosphate: step 4/5. Catalyzes the reversible conversion of 2-phosphoglycerate (2-PG) into phosphoenolpyruvate (PEP). It is essential for the degradation of carbohydrates via glycolysis. This Methanococcus maripaludis (strain DSM 14266 / JCM 13030 / NBRC 101832 / S2 / LL) protein is Enolase.